Consider the following 1291-residue polypeptide: MEHLSNLEQPTTMDSYDFQKLTNDENLQGTESQVPSGSKSASTNGLLSAASSAAGSSFGLTPSAILQQKHENAQQGKKQNNSKSFSKKPAIDVHSEDAFPTLLSKTGPSKPRIVSWVRKTASNTSVAGSDSVSRDKIPFSASSRASSTKSTLSSVKETDFVTETLILSPDNQAPRMSFVGKPNSVAEIVRTVMHQTSTRINVSTASKTKNTTFLIQGKTSAVKAARRQILKLIGRRETKTMPCPVFVVGAIIGTNGQNLKSIMDRTSTRIQIPKRNNTANESSDDAKKPEKEENSAASTLDDLEPQYEMTTITIEGDFEGVELAQKDIEAIINERTSNTTVRISHISTELYSLLRGPDGKNIKELEEGRDLKVQIPFAYLDPSAPVNPIVLSGEKSAVRECALYLQGQAEELLRTTIPTMLPIPRRQHRFINGEKGVGIQDILRKSGCSVILPPINGDSDVVSVRGPALNISEGIRLTLERANSTIVDAVNITTAYASSKNPFDIASIVARLFLRSRKLIPLEEECAVQYHLPKREELQSNSNKTVIIEISGKSQEAVREGRAKLLALVNQFPESKFYKVTIDPLLQRYVIGSKGKNLQKLRNEHQVELLVGEYGEEDPDVIVCYIGADDGKSPDQIQKELADLAESVKSSAEASAKIVSEIIQVPSVYHKHIVGPKGTTLNAIIGKSEENVIVQLGKVSYRPDSTDDDVYIRGFSKDVERVVSEIKQVVRDAKNHEILHSHVEEFDFPAQYSKNVIGKNGSNVSSLREDLGVQINVEEGHIRIQGIKKNVEETAARIKSQIEALIDDTILRVNIPNDFHRQLIGSNGKYVRRLEEKFSVRVRFPREDDSSNSTGNELMKPTSPDEVVIRGGKKSVAAAKQELLELYEYEKSIAYTSTIDIPSKAVSRVVGRNGSTVENIRTQFDVKIDIGDVSTEETTPVSVRGAKADVENAIKEISAIAEEVKNLVEKVIKIDREYHRYLIGPNGSKLQNTIKECGGSTDKTETARLISFSNGNSEEERNSVVLRGDKEIVEALETRLLEIVEELKNQVEEKIEVPQRCISSIIGRMGSTRRDIERKTSTMLNIPNVLDPEETVTITIVGSPENCEKAKEMIQEKVASQYTQMITVPDTVYESIMKGILMKKLRSDLKVFVDTPEIKPVQPTEVVLEDHEDGVFPWKLVTHDYTGSSSSEWAVRGHKENVEKAIASLEKSIKQVMENCIAYLGIPTNLHRRIIGSGGSIINKIRKIAQVKIDVPRTPGDEIVVVQGSRAGVVKAKDLIFERLQENQNQE.

Residues 1-39 (MEHLSNLEQPTTMDSYDFQKLTNDENLQGTESQVPSGSK) are compositionally biased toward polar residues. Disordered stretches follow at residues 1–45 (MEHL…STNG) and 70–91 (HENAQQGKKQNNSKSFSKKPAI). Residues 73-88 (AQQGKKQNNSKSFSKK) show a composition bias toward low complexity. Ser-115 is modified (phosphoserine). Residues 124–148 (TSVAGSDSVSRDKIPFSASSRASST) are disordered. 12 consecutive KH domains span residues 166–229 (ILSP…RRQI), 236–328 (RETK…QKDI), 339–405 (TTVR…ALYL), 416–486 (TIPT…NSTI), 575–644 (SKFY…LADL), 658–726 (IVSE…VSEI), 741–798 (SHVE…AARI), 808–883 (DTIL…KQEL), 894–957 (AYTS…IKEI), 967–1040 (LVEK…ETRL), 1050–1114 (QVEE…KEMI), and 1219–1280 (NCIA…KDLI). Residues 266-303 (TSTRIQIPKRNNTANESSDDAKKPEKEENSAASTLDDL) form a disordered region. A compositionally biased stretch (polar residues) spans 268-281 (TRIQIPKRNNTANE). A compositionally biased stretch (basic and acidic residues) spans 284–294 (DDAKKPEKEEN). Residues 845 to 865 (PREDDSSNSTGNELMKPTSPD) form a disordered region. Ser-934 bears the Phosphoserine mark. A Phosphothreonine modification is found at Thr-935.

It localises to the endoplasmic reticulum. Its subcellular location is the cytoplasm. Functionally, required for cell survival under thermal stress. The protein is Vigilin 1 (vgl1) of Schizosaccharomyces pombe (strain 972 / ATCC 24843) (Fission yeast).